The sequence spans 68 residues: Large ribosomal subunit protein uL29 (68 aa).

The protein belongs to the universal ribosomal protein uL29 family.

This is Large ribosomal subunit protein uL29 from Streptococcus agalactiae serotype Ia (strain ATCC 27591 / A909 / CDC SS700).